The primary structure comprises 873 residues: Zinc fingers and homeoboxes protein 1 (873 aa).

At Thr-36 the chain carries Phosphothreonine. The tract at residues 41–63 (AKAESVSSDEEVHGSVDSDNQQN) is disordered. Ser-45, Ser-47, and Ser-48 each carry phosphoserine. The span at 50-63 (EEVHGSVDSDNQQN) shows a compositional bias: basic and acidic residues. C2H2-type zinc fingers lie at residues 70-93 (YECKYCTFQTPDLNMFTFHVDSEH) and 102-125 (YVCVECNFLTKRYDALSEHNLKYH). A Glycyl lysine isopeptide (Lys-Gly) (interchain with G-Cter in SUMO2) cross-link involves residue Lys-159. Positions 198–247 (VHHNSAEGTSEEKENGVKASQEENAESVSSSALESNTSTSTINRVHPSPA) are disordered. A Phosphoserine modification is found at Ser-202. Residues 223–238 (ESVSSSALESNTSTST) are compositionally biased toward low complexity. The interval 272–432 (NSNLLPKVLI…QTNVQKSQVP (161 aa)) is required for dimerization. Residues 272 to 564 (NSNLLPKVLI…SQQKQSWNPF (293 aa)) are required for interaction with NFYA. Residues 284–346 (NSIPTYNAAL…LKHGVSWTPE (63 aa)) constitute a DNA-binding region (homeobox 1). The segment at 429–456 (SQVPAAQPATDTKPATAAVPSSPSVRPE) is disordered. Glycyl lysine isopeptide (Lys-Gly) (interchain with G-Cter in SUMO2) cross-links involve residues Lys-441 and Lys-485. A DNA-binding region (homeobox 2) is located at residues 464–526 (SFGIRAKKTK…YNQRNSKSNQ (63 aa)). Disordered stretches follow at residues 541–568 (DSSDETPEPPAAAASQQKQSWNPFPDFA), 627–668 (DEKI…CKKT), and 731–767 (SSSLNGLSSLRRRGRGRPKGRGRGRPRGRPRGGKRMN). Positions 569-630 (PQKFKEKTAE…KTKALKDEKI (62 aa)) form a DNA-binding region, homeobox 3. Lys-629 is covalently cross-linked (Glycyl lysine isopeptide (Lys-Gly) (interchain with G-Cter in SUMO2)). Ser-648 carries the phosphoserine modification. Residues 660-722 (GTGKICKKTP…YAWKNGNLKW (63 aa)) constitute a DNA-binding region (homeobox 4). The required for nuclear localization stretch occupies residues 734 to 768 (LNGLSSLRRRGRGRPKGRGRGRPRGRPRGGKRMNT). A compositionally biased stretch (basic residues) spans 740 to 764 (LRRRGRGRPKGRGRGRPRGRPRGGK). Ser-774 is subject to Phosphoserine. Residues 777 to 832 (KFKTGTAILKDYYLKHKFLNEQDLDELVNRSHMGYEQVREWFAERQRRSELGIELF) constitute a DNA-binding region (homeobox 5). Positions 829-873 (IELFEENEEEDEVVDDQEEDEEETDDSDTWEPPRHVKRKLSKSDD) are disordered. Positions 831–857 (LFEENEEEDEVVDDQEEDEEETDDSDT) are enriched in acidic residues. The required for repressor activity stretch occupies residues 831-873 (LFEENEEEDEVVDDQEEDEEETDDSDTWEPPRHVKRKLSKSDD). A compositionally biased stretch (basic residues) spans 863–873 (HVKRKLSKSDD).

It belongs to the ZHX family. Forms homodimers. Heterodimer (via HD1 domain) with ZHX2 (via HD1 domain). Also forms a heterodimer with ZHX3 which is a prerequisite for repressor activity. Interacts with ATF7IP and NFYA. Interacts (via homeobox domains) with DNMT3B (via PWWP domain). In terms of tissue distribution, widely expressed with highest levels in brain.

Its subcellular location is the nucleus. In terms of biological role, acts as a transcriptional repressor. Increases DNMT3B-mediated repressive transcriptional activity when DNMT3B is tethered to DNA. May link molecule between DNMT3B and other co-repressor proteins. The protein is Zinc fingers and homeoboxes protein 1 (Zhx1) of Mus musculus (Mouse).